Reading from the N-terminus, the 265-residue chain is UPF0354 protein BH3252 (265 aa).

This sequence belongs to the UPF0354 family.

The polypeptide is UPF0354 protein BH3252 (Halalkalibacterium halodurans (strain ATCC BAA-125 / DSM 18197 / FERM 7344 / JCM 9153 / C-125) (Bacillus halodurans)).